Here is a 134-residue protein sequence, read N- to C-terminus: Salivary protein 15 Iric-1 (134 aa).

The first 21 residues, 1 to 21, serve as a signal peptide directing secretion; that stretch reads MESFVAMKVVCITVLFVIVAV. An N-linked (GlcNAc...) asparagine glycan is attached at Asn-22. Positions 48 to 67 are required for Borrelia OspC-binding; that stretch reads PSYIRNPQKLALELLEICKN. Asn-91 and Asn-103 each carry an N-linked (GlcNAc...) asparagine glycan. Residues 115-134 are CD4-binding; the sequence is GPNGETCAEKSKCVGHIPGC.

It belongs to the salp15 family. Monomer. Interacts with host CD4. Interacts with host DC-SIGN (CD209). In terms of assembly, (Microbial infection) Interacts with Borrelia outer surface protein C (OspC). In terms of tissue distribution, expressed in salivary glands. Detected in fed adult female.

It is found in the secreted. In terms of biological role, salivary tick protein that downregulates host immune system by binding to both dendritic cells, and CD4(+) T cells. Specifically binds to the CD4 coreceptor on T cells. This interaction prevents the activation of the Src kinase, Lck, and its downstream substrate Zap-70, and results in deficient activation of PLCgamma1, the repression of calcium fluxes triggered by T-cell antigen receptor (TCR) ligation, and a subsequent reduction in interleukin-2 production. This salivary protein also binds to DC-SIGN (CD209) on dendritic cells (DC) and activates the Raf-1 kinase/MEK signaling pathway that results in down-regulating expression of pro-inflammatory cytokines. Furthermore, it inhibits T cell proliferation induced by DCs. In addition, it inhibits in vitro keratinocyte inflammation induced by Borrelia burgdorferi or by the major outer surface protein (OspC) of Borrelia. In addition, it downregulates chemokines and monocyte chemoattractant protein 1, as well as several antimicrobial peptides such as defensins, cathelicidin, psoriasin, and RNase 7. Apart from its immunomodulatory activities, it is also associated with protection of Borrelia spirochetes from antibody-mediated killing through its binding to OspC. In vivo, tests on different immune disease animal models show promising therapeutic results, e.g., in inhibiting HIV infection, experimental autoimmune encephalomyelitis, transplantation rejection, and asthma. Functionally, (Microbial infection) Protects Borrelia garinii (strain VSBP) from host complement-mediated killing by binding to the surface of spirochetes and preventing deposition of host C5b-9 membrane attack complexes. Protects Borrelia garinii (strain A87S) from host complement-mediated killing. Its function is as follows. (Microbial infection) Partially protects Borrelia burgdorferi (strains VS215 and B31) from host complement-mediated killing. The sequence is that of Salivary protein 15 Iric-1 from Ixodes ricinus (Common tick).